Here is a 167-residue protein sequence, read N- to C-terminus: MSKKQTKDKANGAKATKTIALNKRARHEYHLEERYEAGLALQGWEVKAIRAGRANIVDGYAYVRSGEIYLIGAQITPLIQASTHTVPVERRDRKLLLHRAEIDKVLTRVEREGYTLVPTALYWSSNKVKLEIALAKGKQNHDKRDAAKDRDWQRDKQRVMRRHNRDA.

Over residues Gln-139–Arg-158 the composition is skewed to basic and acidic residues. The tract at residues Gln-139 to Ala-167 is disordered.

The protein belongs to the SmpB family.

It localises to the cytoplasm. In terms of biological role, required for rescue of stalled ribosomes mediated by trans-translation. Binds to transfer-messenger RNA (tmRNA), required for stable association of tmRNA with ribosomes. tmRNA and SmpB together mimic tRNA shape, replacing the anticodon stem-loop with SmpB. tmRNA is encoded by the ssrA gene; the 2 termini fold to resemble tRNA(Ala) and it encodes a 'tag peptide', a short internal open reading frame. During trans-translation Ala-aminoacylated tmRNA acts like a tRNA, entering the A-site of stalled ribosomes, displacing the stalled mRNA. The ribosome then switches to translate the ORF on the tmRNA; the nascent peptide is terminated with the 'tag peptide' encoded by the tmRNA and targeted for degradation. The ribosome is freed to recommence translation, which seems to be the essential function of trans-translation. In Xanthomonas euvesicatoria pv. vesicatoria (strain 85-10) (Xanthomonas campestris pv. vesicatoria), this protein is SsrA-binding protein.